Consider the following 621-residue polypeptide: Ubiquitin carboxyl-terminal hydrolase MINDY-2 (621 aa).

Disordered regions lie at residues 1-106 and 119-179; these read MESS…RGQY and VGHE…LESF. The residue at position 94 (serine 94) is a Phosphoserine. The segment covering 145 to 163 has biased composition (low complexity); the sequence is AAGSEEPSSAGGLSSSCSD. The active-site Nucleophile is the cysteine 266. The active-site Proton acceptor is histidine 448. The tract at residues 507 to 559 is ubiquitin-binding domain (UBD); the sequence is GQQDQIDQDYLMALSLQQEQQSQEINWEQIPEGISDLELAKKLQEEEDRRASQ. Residues 556–621 are disordered; it reads RASQYYQEQE…EKEKNSCVIL (66 aa). The span at 558-591 shows a compositional bias: low complexity; it reads SQYYQEQEQAAAAAAAASTQAQQGQPAQASPSSG. The span at 597–621 shows a compositional bias: basic and acidic residues; the sequence is SERKRKEPREKDKEKEKEKNSCVIL.

The protein belongs to the MINDY deubiquitinase family. FAM63 subfamily.

It carries out the reaction Thiol-dependent hydrolysis of ester, thioester, amide, peptide and isopeptide bonds formed by the C-terminal Gly of ubiquitin (a 76-residue protein attached to proteins as an intracellular targeting signal).. Its function is as follows. Hydrolase that can remove 'Lys-48'-linked conjugated ubiquitin from proteins. Binds to polyubiquitin chains of different linkage types, including 'Lys-6', 'Lys-11', 'Lys-29', 'Lys-33', 'Lys-48' and 'Lys-63'. May play a regulatory role at the level of protein turnover. This chain is Ubiquitin carboxyl-terminal hydrolase MINDY-2, found in Homo sapiens (Human).